The sequence spans 416 residues: Pectin acetylesterase 10 (416 aa).

An N-terminal signal peptide occupies residues 1–20 (MRKLFLLGFIVAGLVLGNEA). N-linked (GlcNAc...) asparagine glycosylation occurs at asparagine 27. Residues serine 198, aspartate 294, and histidine 361 each act as charge relay system in the active site.

It belongs to the pectinacetylesterase family.

It is found in the secreted. Its subcellular location is the cell wall. Hydrolyzes acetyl esters in homogalacturonan regions of pectin. In type I primary cell wall, galacturonic acid residues of pectin can be acetylated at the O-2 and O-3 positions. Decreasing the degree of acetylation of pectin gels in vitro alters their physical properties. This chain is Pectin acetylesterase 10, found in Arabidopsis thaliana (Mouse-ear cress).